A 166-amino-acid polypeptide reads, in one-letter code: NAD(P)H-quinone oxidoreductase subunit I, chloroplastic (166 aa).

4Fe-4S ferredoxin-type domains follow at residues 55–84 (GRIHFEFDKCIACEVCVRVCPIDLPVVDWK) and 95–124 (LNYSIDFGICIFCGNCVEYCPTNCLSMTEE). Residues Cys-64, Cys-67, Cys-70, Cys-74, Cys-104, Cys-107, Cys-110, and Cys-114 each contribute to the [4Fe-4S] cluster site.

The protein belongs to the complex I 23 kDa subunit family. As to quaternary structure, NDH is composed of at least 16 different subunits, 5 of which are encoded in the nucleus. It depends on [4Fe-4S] cluster as a cofactor.

It is found in the plastid. The protein resides in the chloroplast thylakoid membrane. The catalysed reaction is a plastoquinone + NADH + (n+1) H(+)(in) = a plastoquinol + NAD(+) + n H(+)(out). It catalyses the reaction a plastoquinone + NADPH + (n+1) H(+)(in) = a plastoquinol + NADP(+) + n H(+)(out). Functionally, NDH shuttles electrons from NAD(P)H:plastoquinone, via FMN and iron-sulfur (Fe-S) centers, to quinones in the photosynthetic chain and possibly in a chloroplast respiratory chain. The immediate electron acceptor for the enzyme in this species is believed to be plastoquinone. Couples the redox reaction to proton translocation, and thus conserves the redox energy in a proton gradient. In Oxypappus scaber, this protein is NAD(P)H-quinone oxidoreductase subunit I, chloroplastic.